Consider the following 478-residue polypeptide: Cytochrome c-552 (478 aa).

The first 27 residues, 1–27 (MKKQWTRRSAAAIAMVTTLLLSSHSFA), serve as a signal peptide directing secretion. His91 lines the heme c pocket. Residues Cys119, Cys122, and Lys123 each contribute to the heme site. Positions 157, 160, 161, 206, 209, and 210 each coordinate heme c. Residues Glu212, Tyr213, Lys258, and Gln260 each coordinate Ca(2+). Substrate is bound at residue Tyr213. A substrate-binding site is contributed by His261. His272, Cys279, Cys282, His283, His298, Cys311, Cys314, His315, and His390 together coordinate heme c.

This sequence belongs to the cytochrome c-552 family. It depends on Ca(2+) as a cofactor. Heme c is required as a cofactor.

The protein localises to the periplasm. The enzyme catalyses 6 Fe(III)-[cytochrome c] + NH4(+) + 2 H2O = 6 Fe(II)-[cytochrome c] + nitrite + 8 H(+). It functions in the pathway nitrogen metabolism; nitrate reduction (assimilation). Its function is as follows. Catalyzes the reduction of nitrite to ammonia, consuming six electrons in the process. The polypeptide is Cytochrome c-552 (Aliivibrio salmonicida (strain LFI1238) (Vibrio salmonicida (strain LFI1238))).